The primary structure comprises 395 residues: uncharacterized protein (395 aa).

The next 12 membrane-spanning stretches (helical) occupy residues 12–34 (LLAS…TIYL), 44–66 (LIGY…FGIL), 75–94 (YMLL…TLVN), 99–121 (VVLF…KAWF), 134–156 (FSIN…TLLV), 160–182 (INLP…QIWV), 208–230 (LLWF…SCIS), 245–264 (VVAV…QYSV), 271–293 (ANIR…GFIF), 298–320 (LLLW…PGEY), 341–360 (LGWL…LTSL), and 364–381 (SLFV…VLML).

Belongs to the major facilitator superfamily.

The protein localises to the cell inner membrane. A transporter able to export peptides. When overexpressed, allows cells deleted for multiple peptidases (pepA, pepB, pepD and pepN) to grow in the presence of dipeptides Ala-Gln or Gly-Tyr which otherwise inhibit growth. Cells overexpressing this protein have decreased intracellular levels of Ala-Gln dipeptide, and in a system that produces the Ala-Gln dipeptide overproduction of this protein increases export of the dipeptide. This is an uncharacterized protein from Escherichia coli (strain K12).